A 231-amino-acid chain; its full sequence is uncharacterized protein (231 aa).

4 helical membrane passes run 39–59 (FCIS…YGPF), 70–90 (ALSL…VPVI), 156–176 (AIIS…GGSI), and 189–206 (IVAI…NMFF).

The protein belongs to the FliR/MopE/SpaR family.

It is found in the cell membrane. This is an uncharacterized protein from Escherichia coli (strain K12).